A 143-amino-acid polypeptide reads, in one-letter code: Hemoglobin subunit alpha (143 aa).

Ser-1 is subject to N-acetylserine. Residues 1 to 143 (SLSATDKARV…LALALSEKYR (143 aa)) form the Globin domain. An O2-binding site is contributed by His-60. His-89 is a heme b binding site.

It belongs to the globin family. As to quaternary structure, heterotetramer of two alpha chains and two beta chains. As to expression, red blood cells.

Involved in oxygen transport from gills to the various peripheral tissues. The sequence is that of Hemoglobin subunit alpha (hba) from Leiostomus xanthurus (Spot).